We begin with the raw amino-acid sequence, 259 residues long: Ribosomal RNA small subunit methyltransferase J (259 aa).

S-adenosyl-L-methionine-binding positions include 101–102 (RD), 117–118 (ER), 153–154 (SS), and Asp176.

The protein belongs to the methyltransferase superfamily. RsmJ family.

The protein localises to the cytoplasm. It carries out the reaction guanosine(1516) in 16S rRNA + S-adenosyl-L-methionine = N(2)-methylguanosine(1516) in 16S rRNA + S-adenosyl-L-homocysteine + H(+). Its function is as follows. Specifically methylates the guanosine in position 1516 of 16S rRNA. The protein is Ribosomal RNA small subunit methyltransferase J of Aliivibrio fischeri (strain ATCC 700601 / ES114) (Vibrio fischeri).